Here is a 163-residue protein sequence, read N- to C-terminus: DNA endonuclease I-CreI (163 aa).

Mg(2+) is bound by residues Gly19 and Asp20. Interaction with DNA regions lie at residues 26-38 (QIKP…FKHQ), 44-47 (QVTQ), 68-70 (RDR), and 138-143 (SKTRKT).

It belongs to the LAGLIDADG endonuclease family. In terms of assembly, homodimer. Requires Mg(2+) as cofactor. The cofactor is Mn(2+). Co(2+) is required as a cofactor. It depends on Ni(2+) as a cofactor. Zn(2+) serves as cofactor.

It localises to the plastid. The protein localises to the chloroplast. Its function is as follows. Endonuclease involved in group I intron homing. Recognizes and cleaves a 19-24 bp palindromic DNA site. The chain is DNA endonuclease I-CreI from Chlamydomonas reinhardtii (Chlamydomonas smithii).